Reading from the N-terminus, the 2005-residue chain is Chitin synthase 8 (2005 aa).

Positions 5 to 773 (DEVAKLSQLT…AFRELEDELR (769 aa)) constitute a Myosin motor domain. 108-115 (GDTSSGKS) serves as a coordination point for ATP. N-linked (GlcNAc...) asparagine glycans are attached at residues asparagine 164, asparagine 364, asparagine 390, and asparagine 546. Positions 585-631 (QSVKPMRAPSTRRPNRGNTIKRTNTIKKADDDDSDEDAADAADASTS) are disordered. Over residues 615–624 (DDDSDEDAAD) the composition is skewed to acidic residues. The actin-binding stretch occupies residues 647-669 (LDLLLETLEDTKTWFTLCLRPND). The next 2 membrane-spanning stretches (helical) occupy residues 929–949 (KWVALTWAITFWIPSFILSRF) and 965–985 (LAINLIIWFICACAVFVIVVL). Asparagine 1076 carries an N-linked (GlcNAc...) asparagine glycan. 3 helical membrane passes run 1232–1252 (ILLALSLFMVAILGFKFLAAL), 1604–1624 (LIFTPGLCGFCLFSMRFIVFI), and 1626–1646 (LLSTIIAPVTVCYIVYLIVLV). N-linked (GlcNAc...) asparagine glycosylation is present at asparagine 1650. The next 2 helical transmembrane spans lie at 1653–1673 (VPLTAIIMLAAIYGCQAVIFL) and 1680–1700 (MIGWMIVYIIGIPIWSLFLPL). Asparagine 1770 and asparagine 1794 each carry an N-linked (GlcNAc...) asparagine glycan. Residues 1796 to 1821 (SFGHSPSPSYGGTPSQFGAFAPGPGS) are disordered. The segment covering 1797–1811 (FGHSPSPSYGGTPSQ) has biased composition (polar residues). Asparagine 1882 carries N-linked (GlcNAc...) asparagine glycosylation. The segment at 1912–1950 (FATAEQQQQQQQQQQAAGLSGSGGSKSPPREAVAGGLPS) is disordered. The span at 1917-1930 (QQQQQQQQQQAAGL) shows a compositional bias: low complexity. One can recognise a DEK-C domain in the interval 1948–2003 (LPSDSQIKLDIRSLIAESDLTTITKKQLRAKLEQKYATSIESKKAFINSEIENVLS).

The protein in the N-terminal section; belongs to the TRAFAC class myosin-kinesin ATPase superfamily. Myosin family. It in the C-terminal section; belongs to the chitin synthase family. Class V subfamily.

Its subcellular location is the cell membrane. It localises to the cytoplasmic vesicle membrane. It is found in the cell tip. The catalysed reaction is [(1-&gt;4)-N-acetyl-beta-D-glucosaminyl](n) + UDP-N-acetyl-alpha-D-glucosamine = [(1-&gt;4)-N-acetyl-beta-D-glucosaminyl](n+1) + UDP + H(+). In terms of biological role, polymerizes chitin, a structural polymer of the cell wall and septum, by transferring the sugar moiety of UDP-GlcNAc to the non-reducing end of the growing chitin polymer. Involved in mating tube and dikaryotic hyphae formation and required for the formation of invading hyphae during plant infection. This Mycosarcoma maydis (Corn smut fungus) protein is Chitin synthase 8.